A 64-amino-acid chain; its full sequence is Large ribosomal subunit protein bL32 (64 aa).

Positions 1 to 23 (MAVQKSRVTPSRRGQRRSHDALA) are disordered.

Belongs to the bacterial ribosomal protein bL32 family.

The protein is Large ribosomal subunit protein bL32 of Xylella fastidiosa (strain M23).